A 216-amino-acid chain; its full sequence is MAAPPARARADYDYLIKLLLIGDSGVGKSCLLLRFSDGSFTTSFITTIGIDFKIRTIELDGKRIKLQIWDTAGQERFRTITTAYYRGAMGILLVYDVTDESSFNNIRNWIRNIEQHASDSVNKILVGNKADMDESKRAVPKSKGQALADEYGMKFFETSAKTNLNVEEVFFSIAKDIKQRLADTDARAEPQTIKINQSDQGAGTSQATQKSACCGT.

A GTP-binding site is contributed by 22-29 (GDSGVGKS). Residues 44-52 (FITTIGIDF) carry the Effector region motif. Residues 70-74 (DTAGQ), 128-131 (NKAD), and 159-160 (SA) contribute to the GTP site. Residues 185-216 (DARAEPQTIKINQSDQGAGTSQATQKSACCGT) are disordered. Residues 193–216 (IKINQSDQGAGTSQATQKSACCGT) show a composition bias toward polar residues. Residues Cys-213 and Cys-214 are each lipidated (S-geranylgeranyl cysteine).

The protein belongs to the small GTPase superfamily. Rab family. In terms of assembly, interacts with PI5K2.

The protein localises to the golgi apparatus membrane. It is found in the cell membrane. Functionally, involved in membrane trafficking from the Golgi to the plasma membrane. This chain is Ras-related protein RABE1a (RABE1A), found in Arabidopsis thaliana (Mouse-ear cress).